Consider the following 282-residue polypeptide: Fused uL13/uS9 ribosomal subunit protein (282 aa).

A large ribosomal subunit protein uL13 region spans residues 1–141; it reads MLLMIINGEG…LGEISELLGA (141 aa). The tract at residues 150–282 is small ribosomal subunit protein uS9; that stretch reads MKKVIHTSGK…ARARRQKSYR (133 aa). A disordered region spans residues 259-282; sequence DPRRSEPKKYGGRGARARRQKSYR. A compositionally biased stretch (basic residues) spans 273–282; that stretch reads ARARRQKSYR.

It in the N-terminal section; belongs to the universal ribosomal protein uL13 family. In the C-terminal section; belongs to the universal ribosomal protein uS9 family. L13 is part of the 50S ribosomal subunit. S9 is part of the 30S ribosomal subunit.

Its function is as follows. L13 protein is one of the early assembly proteins of the 50S ribosomal subunit, although it is not seen to bind rRNA by itself. It is important during the early stages of 50S assembly. This Methanothermobacter thermautotrophicus (strain ATCC 29096 / DSM 1053 / JCM 10044 / NBRC 100330 / Delta H) (Methanobacterium thermoautotrophicum) protein is Fused uL13/uS9 ribosomal subunit protein (rpl13/rps9).